A 792-amino-acid polypeptide reads, in one-letter code: Protein SEY1 homolog 2 (792 aa).

The Cytoplasmic portion of the chain corresponds to 1-638 (MEQIITGDGA…NIKAQANREQ (638 aa)). The GB1/RHD3-type G domain maps to 28–245 (GVDYHTVAII…LKDYLFAEKS (218 aa)). 38–45 (GPQSSGKS) is a GTP binding site. The chain crosses the membrane as a helical span at residues 639 to 659 (IPGWAWLATFLCSSNYIMKLL). The Lumenal portion of the chain corresponds to 660 to 662 (ANP). A helical membrane pass occupies residues 663–683 (IFFALAVIIGGIYSILRMLGL). The Cytoplasmic segment spans residues 684–792 (QDVAKKTLLD…LTRTQSLEFM (109 aa)). Residues 691–718 (LLDKFNSLLKNLTKDENEQEKEGEENEE) are a coiled coil. Residues 703–792 (TKDENEQEKE…LTRTQSLEFM (90 aa)) are disordered. Positions 707–723 (NEQEKEGEENEEPEEDQ) are enriched in acidic residues. 2 stretches are compositionally biased toward polar residues: residues 739–751 (SVSQ…SIYK) and 764–774 (IPQTSPLGNND).

Belongs to the TRAFAC class dynamin-like GTPase superfamily. GB1/RHD3 GTPase family. RHD3 subfamily.

The protein localises to the endoplasmic reticulum membrane. Probable GTP-binding protein that may be involved in cell development. This is Protein SEY1 homolog 2 from Trichomonas vaginalis (strain ATCC PRA-98 / G3).